The following is a 556-amino-acid chain: Potassium-transporting ATPase potassium-binding subunit (556 aa).

Transmembrane regions (helical) follow at residues 6–26, 65–85, 133–153, 176–196, 249–269, 283–303, 378–398, 419–439, 483–503, and 526–546; these read AGLIFLAVLVAALVVVHVPLG, GVLAFSSVSIIFLFVLQLVQG, GLAVQNFVSAAVGMAVAVALV, LRILLPISIVGAVLLVAGGAI, PTAWTNWLEIFLILVIGFSLP, YAIASVMASLYLLSTGFMLWF, GLYGMLVLAVITVFVAGLMVG, YFLVTPLIVLTGTAIAMALPG, ALGLAMAFGRFLPIVLVLALA, and FVGMVAGVTLIVVALTFLPML.

Belongs to the KdpA family. As to quaternary structure, the system is composed of three essential subunits: KdpA, KdpB and KdpC.

Its subcellular location is the cell membrane. Functionally, part of the high-affinity ATP-driven potassium transport (or Kdp) system, which catalyzes the hydrolysis of ATP coupled with the electrogenic transport of potassium into the cytoplasm. This subunit binds the extracellular potassium ions and delivers the ions to the membrane domain of KdpB through an intramembrane tunnel. This is Potassium-transporting ATPase potassium-binding subunit from Mycobacterium avium (strain 104).